Here is a 112-residue protein sequence, read N- to C-terminus: Nitrogen regulatory protein P-II (112 aa).

An O-UMP-tyrosine modification is found at Tyr-51.

The protein belongs to the P(II) protein family. In terms of assembly, homotrimer.

Its function is as follows. In nitrogen-limiting conditions, when the ratio of Gln to 2-ketoglutarate decreases, P-II is uridylylated to P-II-UMP. P-II-UMP allows the deadenylation of glutamine synthetase (GS), thus activating the enzyme. Conversely, in nitrogen excess P-II is deuridylated and promotes the adenylation of GS. P-II indirectly controls the transcription of the GS gene (glnA). P-II prevents NR-II-catalyzed conversion of NR-I to NR-I-phosphate, the transcriptional activator of glnA. When P-II is uridylylated to P-II-UMP, these events are reversed. This is Nitrogen regulatory protein P-II (glnB) from Mycobacterium bovis (strain ATCC BAA-935 / AF2122/97).